The primary structure comprises 276 residues: MLLRFTKMHGLGNDFMVLDLISQHAHVQPKHAKQWGDRHTGVGFDQLLIVEPPSHPDVDFRYRIFNSDGSEVEQCGNGARCFARFVLDKRLTTKKTIRVETKSGVIELRVQNDGQVCVNMGAPRLEPAQVPFQAEQAALTYRVDVEGQSVELAALSMGNPHAVLRVDNVDSAPVHTLGPKLEHHPRFPQRVNVGFLQVLDRKHARLRVWERGAGETQACGTGACAAAVAAIRQGWMDSPVQLELPGGKLSIEWAGEGQPVMMTGPAARVYEGQVRL.

3 residues coordinate substrate: Asn-13, Gln-46, and Asn-66. The Proton donor role is filled by Cys-75. Substrate contacts are provided by residues 76–77 (GN), Asn-159, Asn-192, and 210–211 (ER). Cys-219 functions as the Proton acceptor in the catalytic mechanism. 220–221 (GT) is a binding site for substrate.

It belongs to the diaminopimelate epimerase family. In terms of assembly, homodimer.

The protein resides in the cytoplasm. It catalyses the reaction (2S,6S)-2,6-diaminopimelate = meso-2,6-diaminopimelate. Its pathway is amino-acid biosynthesis; L-lysine biosynthesis via DAP pathway; DL-2,6-diaminopimelate from LL-2,6-diaminopimelate: step 1/1. Its function is as follows. Catalyzes the stereoinversion of LL-2,6-diaminopimelate (L,L-DAP) to meso-diaminopimelate (meso-DAP), a precursor of L-lysine and an essential component of the bacterial peptidoglycan. The sequence is that of Diaminopimelate epimerase from Ectopseudomonas mendocina (strain ymp) (Pseudomonas mendocina).